Consider the following 260-residue polypeptide: Indole-3-glycerol phosphate synthase (260 aa).

Belongs to the TrpC family.

It carries out the reaction 1-(2-carboxyphenylamino)-1-deoxy-D-ribulose 5-phosphate + H(+) = (1S,2R)-1-C-(indol-3-yl)glycerol 3-phosphate + CO2 + H2O. It functions in the pathway amino-acid biosynthesis; L-tryptophan biosynthesis; L-tryptophan from chorismate: step 4/5. In Staphylococcus haemolyticus (strain JCSC1435), this protein is Indole-3-glycerol phosphate synthase.